A 426-amino-acid polypeptide reads, in one-letter code: Enolase (426 aa).

Gln163 lines the (2R)-2-phosphoglycerate pocket. The active-site Proton donor is the Glu205. Residues Asp242, Glu286, and Asp313 each contribute to the Mg(2+) site. Residues Lys338, Arg367, Ser368, and Lys389 each coordinate (2R)-2-phosphoglycerate. Lys338 acts as the Proton acceptor in catalysis.

It belongs to the enolase family. It depends on Mg(2+) as a cofactor.

The protein localises to the cytoplasm. It localises to the secreted. The protein resides in the cell surface. The enzyme catalyses (2R)-2-phosphoglycerate = phosphoenolpyruvate + H2O. It participates in carbohydrate degradation; glycolysis; pyruvate from D-glyceraldehyde 3-phosphate: step 4/5. Catalyzes the reversible conversion of 2-phosphoglycerate (2-PG) into phosphoenolpyruvate (PEP). It is essential for the degradation of carbohydrates via glycolysis. This Syntrophobacter fumaroxidans (strain DSM 10017 / MPOB) protein is Enolase.